The sequence spans 60 residues: Large ribosomal subunit protein bL32 (60 aa).

The segment at 1-21 is disordered; that stretch reads MAVPARHTSKAKKNKRRTHYK. Residues 7 to 20 show a composition bias toward basic residues; the sequence is HTSKAKKNKRRTHY.

The protein belongs to the bacterial ribosomal protein bL32 family.

The sequence is that of Large ribosomal subunit protein bL32 from Streptococcus thermophilus (strain ATCC BAA-250 / LMG 18311).